Consider the following 512-residue polypeptide: Tyrosine decarboxylase (512 aa).

L-tyrosine-binding residues include Pro-100, His-205, and His-320. Lys-321 is modified (N6-(pyridoxal phosphate)lysine). Tyr-350 lines the L-tyrosine pocket.

This sequence belongs to the group II decarboxylase family. In terms of assembly, homodimer. Requires pyridoxal 5'-phosphate as cofactor. In terms of tissue distribution, mainly expressed in roots, stems and capsule walls.

The catalysed reaction is L-tyrosine + H(+) = tyramine + CO2. Functionally, tyrosine decarboxylase that converts tyrosine into tyramine, a precursor of isoquinoline alkaloids and various amides. The polypeptide is Tyrosine decarboxylase (Papaver somniferum (Opium poppy)).